Here is a 492-residue protein sequence, read N- to C-terminus: Protein adenylyltransferase Fic (492 aa).

The span at 1–17 (MCMEAEPPSPPAQQQEQ) shows a compositional bias: low complexity. Positions 1 to 21 (MCMEAEPPSPPAQQQEQVNPP) are disordered. A helical membrane pass occupies residues 33-55 (LYRLVLLFVAGSLAAWTFHALSS). TPR repeat units follow at residues 118 to 151 (ALGALRMAQDLYLAGKDDKAARLFEHALALAPRH) and 152 to 186 (PEVLLRYGEFLEHNQRNIVLADQYYFQALTISPSN). The Inhibitory (S/T)XXXE(G/N) motif motif lies at 243-248 (SVGIEG). ATP-binding positions include Glu247 and 328–331 (VGGH). A Fido domain is found at 297–432 (ITIKDILELH…IRPFVRFIAD (136 aa)). Residue His375 is part of the active site. ATP is bound by residues 379–386 (DGNGRTSR), 411–412 (YY), and Asn419.

The protein belongs to the fic family. As to quaternary structure, homodimer.

Its subcellular location is the membrane. It carries out the reaction L-tyrosyl-[protein] + ATP = O-(5'-adenylyl)-L-tyrosyl-[protein] + diphosphate. The catalysed reaction is L-threonyl-[protein] + ATP = 3-O-(5'-adenylyl)-L-threonyl-[protein] + diphosphate. The enzyme catalyses 3-O-(5'-adenylyl)-L-threonyl-[protein] + H2O = L-threonyl-[protein] + AMP + H(+). With respect to regulation, the side chain of Glu-247 determines which of the two opposing activities (AMPylase or de-AMPylase) will take place. In response to endoplasmic reticulum stress, mediates de-AMPylase activity. Adenylyltransferase activity is inhibited by the inhibitory helix present at the N-terminus: Glu-247 binds ATP and competes with ATP-binding at Arg-386, thereby preventing adenylyltransferase activity. In unstressed cells, disengagement of Glu-247 promotes adenylyltransferase activity. Activation dissociates ATP-binding from Glu-247, allowing ordered binding of the entire ATP moiety with the alpha-phosphate in an orientation that is productive for accepting an incoming target hydroxyl side chain. Protein that can both mediate the addition of adenosine 5'-monophosphate (AMP) to specific residues of target proteins (AMPylation), and the removal of the same modification from target proteins (de-AMPylation), depending on the context. The side chain of Glu-247 determines which of the two opposing activities (AMPylase or de-AMPylase) will take place. Acts as a key regulator of the unfolded protein response (UPR) by mediating AMPylation or de-AMPylation of Hsc70-3/BiP. In unstressed cells, acts as an adenylyltransferase by mediating AMPylation of Hsc70-3/BiP at 'Thr-518', thereby inactivating it. In response to endoplasmic reticulum stress, acts as a phosphodiesterase by mediating removal of ATP (de-AMPylation) from Hsc70-3/BiP at 'Thr-518', leading to restore HSPA5/BiP activity. In Drosophila simulans (Fruit fly), this protein is Protein adenylyltransferase Fic.